The chain runs to 192 residues: UPF0312 protein plu2095 (192 aa).

An N-terminal signal peptide occupies residues 1–23 (MLKKTLLGLTAGALLLNASSALA).

The protein belongs to the UPF0312 family. Type 1 subfamily.

It localises to the periplasm. This Photorhabdus laumondii subsp. laumondii (strain DSM 15139 / CIP 105565 / TT01) (Photorhabdus luminescens subsp. laumondii) protein is UPF0312 protein plu2095.